We begin with the raw amino-acid sequence, 34 residues long: Brevinin-2Ec (34 aa).

Cys-28 and Cys-34 form a disulfide bridge.

Belongs to the frog skin active peptide (FSAP) family. Brevinin subfamily. As to expression, expressed by the skin glands.

The protein localises to the secreted. Shows antibacterial activity against representative Gram-negative and Gram-positive bacterial species, and hemolytic activity. The protein is Brevinin-2Ec of Pelophylax lessonae (Pool frog).